The chain runs to 343 residues: Farnesyl pyrophosphate synthase (343 aa).

Residues Lys-49, Arg-52, and Gln-87 each contribute to the isopentenyl diphosphate site. Positions 94 and 98 each coordinate Mg(2+). Residue Arg-103 coordinates dimethylallyl diphosphate. Arg-104 contacts isopentenyl diphosphate. Lys-191, Thr-192, Gln-230, Lys-247, and Lys-256 together coordinate dimethylallyl diphosphate.

The protein belongs to the FPP/GGPP synthase family. The cofactor is Mg(2+). As to expression, expressed both in apical and sub-apical cells of glandular secretory trichomes.

Its subcellular location is the cytoplasm. It is found in the nucleus. The catalysed reaction is isopentenyl diphosphate + dimethylallyl diphosphate = (2E)-geranyl diphosphate + diphosphate. It catalyses the reaction isopentenyl diphosphate + (2E)-geranyl diphosphate = (2E,6E)-farnesyl diphosphate + diphosphate. It participates in isoprenoid biosynthesis; farnesyl diphosphate biosynthesis; farnesyl diphosphate from geranyl diphosphate and isopentenyl diphosphate: step 1/1. The protein operates within sesquiterpene biosynthesis. It functions in the pathway isoprenoid biosynthesis; geranyl diphosphate biosynthesis; geranyl diphosphate from dimethylallyl diphosphate and isopentenyl diphosphate: step 1/1. Its function is as follows. Involved in the biosynthesis of the antimalarial endoperoxide artemisinin. Catalyzes the sequential condensation of isopentenyl pyrophosphate with the allylic pyrophosphates, dimethylallyl pyrophosphate, and then with the resultant geranylpyrophosphate to the ultimate product farnesyl pyrophosphate. Promotes anti-malarial and antimicrobial (toward Gram-positive bacteria B.subtilis and S.aureus) activities of plant crude extract probably by triggering artemisinin levels. This chain is Farnesyl pyrophosphate synthase, found in Artemisia annua (Sweet wormwood).